The sequence spans 312 residues: Heme oxygenase 2 (312 aa).

Position 2 is an N-acetylserine (Ser-2). Ser-2 carries the post-translational modification Phosphoserine. His-41 contacts heme b. 2 HRM repeats span residues Lys-260–Ala-265 and Ser-277–Ala-282. S-nitrosocysteine occurs at positions 261 and 278.

It belongs to the heme oxygenase family. In terms of processing, S-nitrosylated by BLVRB.

It is found in the microsome. The protein localises to the endoplasmic reticulum. The catalysed reaction is heme b + 3 reduced [NADPH--hemoprotein reductase] + 3 O2 = biliverdin IXalpha + CO + Fe(2+) + 3 oxidized [NADPH--hemoprotein reductase] + 3 H2O + H(+). Heme oxygenase cleaves the heme ring at the alpha methene bridge to form biliverdin. Biliverdin is subsequently converted to bilirubin by biliverdin reductase. Under physiological conditions, the activity of heme oxygenase is highest in the spleen, where senescent erythrocytes are sequestrated and destroyed. Heme oxygenase 2 could be implicated in the production of carbon monoxide in brain where it could act as a neurotransmitter. This is Heme oxygenase 2 (HMOX2) from Oryctolagus cuniculus (Rabbit).